A 1029-amino-acid polypeptide reads, in one-letter code: Carbamoyl phosphate synthase large chain (1029 aa).

A carboxyphosphate synthetic domain region spans residues 1 to 402 (MPKRTDLQTI…SLQKALRSTE (402 aa)). ATP-binding residues include Arg129, Arg169, Gly175, Gly176, Glu208, Ile210, Glu215, Gly241, Val242, His243, Gln285, and Glu299. One can recognise an ATP-grasp 1 domain in the interval 133-328 (QAAMKKIGVE…IAKIAALLAV (196 aa)). The Mg(2+) site is built by Gln285, Glu299, and Asn301. Positions 285, 299, and 301 each coordinate Mn(2+). The interval 403 to 544 (SDIRGVYAEM…YHYSTYEWED (142 aa)) is oligomerization domain. Residues 545–929 (EVTGTDKPKV…AFYRAQLGAK (385 aa)) form a carbamoyl phosphate synthetic domain region. The ATP-grasp 2 domain maps to 671–863 (NALCERLGLS…LAKSAARIAV (193 aa)). 10 residues coordinate ATP: Arg707, Gln747, Leu749, Glu754, Gly779, Val780, His781, Ser782, Gln822, and Glu834. Gln822, Glu834, and Asn836 together coordinate Mg(2+). Mn(2+) contacts are provided by Gln822, Glu834, and Asn836. The region spanning 930 to 1028 (SYLPLSGTAL…QDWQTQEAVA (99 aa)) is the MGS-like domain. The tract at residues 930 to 1029 (SYLPLSGTAL…DWQTQEAVAG (100 aa)) is allosteric domain.

Belongs to the CarB family. As to quaternary structure, composed of two chains; the small (or glutamine) chain promotes the hydrolysis of glutamine to ammonia, which is used by the large (or ammonia) chain to synthesize carbamoyl phosphate. Tetramer of heterodimers (alpha,beta)4. Mg(2+) is required as a cofactor. Requires Mn(2+) as cofactor.

It catalyses the reaction hydrogencarbonate + L-glutamine + 2 ATP + H2O = carbamoyl phosphate + L-glutamate + 2 ADP + phosphate + 2 H(+). The catalysed reaction is hydrogencarbonate + NH4(+) + 2 ATP = carbamoyl phosphate + 2 ADP + phosphate + 2 H(+). The protein operates within amino-acid biosynthesis; L-arginine biosynthesis; carbamoyl phosphate from bicarbonate: step 1/1. It participates in pyrimidine metabolism; UMP biosynthesis via de novo pathway; (S)-dihydroorotate from bicarbonate: step 1/3. Its function is as follows. Large subunit of the glutamine-dependent carbamoyl phosphate synthetase (CPSase). CPSase catalyzes the formation of carbamoyl phosphate from the ammonia moiety of glutamine, carbonate, and phosphate donated by ATP, constituting the first step of 2 biosynthetic pathways, one leading to arginine and/or urea and the other to pyrimidine nucleotides. The large subunit (synthetase) binds the substrates ammonia (free or transferred from glutamine from the small subunit), hydrogencarbonate and ATP and carries out an ATP-coupled ligase reaction, activating hydrogencarbonate by forming carboxy phosphate which reacts with ammonia to form carbamoyl phosphate. This Deinococcus deserti (strain DSM 17065 / CIP 109153 / LMG 22923 / VCD115) protein is Carbamoyl phosphate synthase large chain.